The chain runs to 388 residues: Succinate--CoA ligase [ADP-forming] subunit beta (388 aa).

One can recognise an ATP-grasp domain in the interval 9 to 244; that stretch reads KEILRKYNVP…LDEEDANEIE (236 aa). Residues lysine 46, 53-55, glutamate 99, alanine 102, and glutamate 107 each bind ATP; that span reads GRG. Residues asparagine 199 and aspartate 213 each coordinate Mg(2+). Substrate contacts are provided by residues asparagine 264 and 321 to 323; that span reads GIM.

It belongs to the succinate/malate CoA ligase beta subunit family. Heterotetramer of two alpha and two beta subunits. It depends on Mg(2+) as a cofactor.

It carries out the reaction succinate + ATP + CoA = succinyl-CoA + ADP + phosphate. The catalysed reaction is GTP + succinate + CoA = succinyl-CoA + GDP + phosphate. The protein operates within carbohydrate metabolism; tricarboxylic acid cycle; succinate from succinyl-CoA (ligase route): step 1/1. Its function is as follows. Succinyl-CoA synthetase functions in the citric acid cycle (TCA), coupling the hydrolysis of succinyl-CoA to the synthesis of either ATP or GTP and thus represents the only step of substrate-level phosphorylation in the TCA. The beta subunit provides nucleotide specificity of the enzyme and binds the substrate succinate, while the binding sites for coenzyme A and phosphate are found in the alpha subunit. The chain is Succinate--CoA ligase [ADP-forming] subunit beta from Cupriavidus necator (strain ATCC 17699 / DSM 428 / KCTC 22496 / NCIMB 10442 / H16 / Stanier 337) (Ralstonia eutropha).